Reading from the N-terminus, the 277-residue chain is Elongation factor Ts (277 aa).

The tract at residues T81 to V84 is involved in Mg(2+) ion dislocation from EF-Tu.

It belongs to the EF-Ts family.

The protein resides in the cytoplasm. Its function is as follows. Associates with the EF-Tu.GDP complex and induces the exchange of GDP to GTP. It remains bound to the aminoacyl-tRNA.EF-Tu.GTP complex up to the GTP hydrolysis stage on the ribosome. This chain is Elongation factor Ts, found in Amoebophilus asiaticus (strain 5a2).